Here is a 205-residue protein sequence, read N- to C-terminus: Protein GrpE (205 aa).

The protein belongs to the GrpE family. As to quaternary structure, homodimer.

It localises to the cytoplasm. Participates actively in the response to hyperosmotic and heat shock by preventing the aggregation of stress-denatured proteins, in association with DnaK and GrpE. It is the nucleotide exchange factor for DnaK and may function as a thermosensor. Unfolded proteins bind initially to DnaJ; upon interaction with the DnaJ-bound protein, DnaK hydrolyzes its bound ATP, resulting in the formation of a stable complex. GrpE releases ADP from DnaK; ATP binding to DnaK triggers the release of the substrate protein, thus completing the reaction cycle. Several rounds of ATP-dependent interactions between DnaJ, DnaK and GrpE are required for fully efficient folding. The sequence is that of Protein GrpE from Shewanella loihica (strain ATCC BAA-1088 / PV-4).